Here is a 262-residue protein sequence, read N- to C-terminus: Ribosomal RNA small subunit methyltransferase A (262 aa).

The S-adenosyl-L-methionine site is built by His16, Leu18, Gly43, Glu64, Asp89, and Asn109.

The protein belongs to the class I-like SAM-binding methyltransferase superfamily. rRNA adenine N(6)-methyltransferase family. RsmA subfamily.

It localises to the cytoplasm. The enzyme catalyses adenosine(1518)/adenosine(1519) in 16S rRNA + 4 S-adenosyl-L-methionine = N(6)-dimethyladenosine(1518)/N(6)-dimethyladenosine(1519) in 16S rRNA + 4 S-adenosyl-L-homocysteine + 4 H(+). Its function is as follows. Specifically dimethylates two adjacent adenosines (A1518 and A1519) in the loop of a conserved hairpin near the 3'-end of 16S rRNA in the 30S particle. May play a critical role in biogenesis of 30S subunits. The protein is Ribosomal RNA small subunit methyltransferase A of Xanthomonas axonopodis pv. citri (strain 306).